The following is a 250-amino-acid chain: Leucyl/phenylalanyl-tRNA--protein transferase (250 aa).

The segment at 1–21 (MTPFRRPTVLGTSASAPFPPA) is disordered.

The protein belongs to the L/F-transferase family.

The protein resides in the cytoplasm. It carries out the reaction N-terminal L-lysyl-[protein] + L-leucyl-tRNA(Leu) = N-terminal L-leucyl-L-lysyl-[protein] + tRNA(Leu) + H(+). The enzyme catalyses N-terminal L-arginyl-[protein] + L-leucyl-tRNA(Leu) = N-terminal L-leucyl-L-arginyl-[protein] + tRNA(Leu) + H(+). It catalyses the reaction L-phenylalanyl-tRNA(Phe) + an N-terminal L-alpha-aminoacyl-[protein] = an N-terminal L-phenylalanyl-L-alpha-aminoacyl-[protein] + tRNA(Phe). Functionally, functions in the N-end rule pathway of protein degradation where it conjugates Leu, Phe and, less efficiently, Met from aminoacyl-tRNAs to the N-termini of proteins containing an N-terminal arginine or lysine. The sequence is that of Leucyl/phenylalanyl-tRNA--protein transferase from Xanthomonas euvesicatoria pv. vesicatoria (strain 85-10) (Xanthomonas campestris pv. vesicatoria).